We begin with the raw amino-acid sequence, 207 residues long: Outer-membrane lipoprotein carrier protein (207 aa).

Residues 1 to 21 form the signal peptide; it reads MRLFRVLLLSAVAFALSPAQA.

It belongs to the LolA family. In terms of assembly, monomer.

It localises to the periplasm. In terms of biological role, participates in the translocation of lipoproteins from the inner membrane to the outer membrane. Only forms a complex with a lipoprotein if the residue after the N-terminal Cys is not an aspartate (The Asp acts as a targeting signal to indicate that the lipoprotein should stay in the inner membrane). The chain is Outer-membrane lipoprotein carrier protein from Azotobacter vinelandii (strain DJ / ATCC BAA-1303).